A 266-amino-acid chain; its full sequence is Exosome complex component Rrp42 (266 aa).

Belongs to the RNase PH family. Rrp42 subfamily. In terms of assembly, component of the archaeal exosome complex. Forms a hexameric ring-like arrangement composed of 3 Rrp41-Rrp42 heterodimers. The hexameric ring associates with a trimer of Rrp4 and/or Csl4 subunits.

Its subcellular location is the cytoplasm. Functionally, non-catalytic component of the exosome, which is a complex involved in RNA degradation. Contributes to the structuring of the Rrp41 active site. The protein is Exosome complex component Rrp42 of Methanosarcina mazei (strain ATCC BAA-159 / DSM 3647 / Goe1 / Go1 / JCM 11833 / OCM 88) (Methanosarcina frisia).